Consider the following 200-residue polypeptide: ADP-ribose 1''-phosphate phosphatase (200 aa).

Residues 1-200 enclose the Macro domain; that stretch reads MDLPSVQSKI…EVTVVRPHGG (200 aa). Substrate is bound by residues 15-17, 29-31, 36-41, and 169-175; these read GDL, ACN, WGKGIA, and FNAGLFG.

This sequence belongs to the POA1 family.

The catalysed reaction is ADP-alpha-D-ribose 1''-phosphate + H2O = ADP-D-ribose + phosphate. Its function is as follows. Highly specific phosphatase involved in the metabolism of ADP-ribose 1''-phosphate (Appr1p) which is produced as a consequence of tRNA splicing. In Neosartorya fischeri (strain ATCC 1020 / DSM 3700 / CBS 544.65 / FGSC A1164 / JCM 1740 / NRRL 181 / WB 181) (Aspergillus fischerianus), this protein is ADP-ribose 1''-phosphate phosphatase (poa1).